The following is a 961-amino-acid chain: Protein lin-2 (961 aa).

Residues Leu17–Ile281 enclose the Protein kinase domain. Positions Lys310–Gly320 are calmodulin-binding. The interval Asn318–Leu366 is disordered. L27 domains lie at Asp365–Val422 and Thr428–Lys479. A PDZ domain is found at Arg545–Thr620. In terms of domain architecture, SH3 spans Ala633–Thr717. The 173-residue stretch at Arg774–Glu946 folds into the Guanylate kinase-like domain.

This sequence belongs to the MAGUK family.

Its function is as follows. May play a structural role in the induction of the vulva. May be required for the localization of signal transduction molecules (such as let-23 receptor) to either the basal membrane domain or the cell junctions. This is Protein lin-2 (lin-2) from Caenorhabditis elegans.